The sequence spans 1673 residues: AF4/FMR2 family member lilli (1673 aa).

9 disordered regions span residues 1 to 24, 54 to 80, 125 to 302, 407 to 534, 575 to 604, 722 to 1086, 1114 to 1133, 1141 to 1160, and 1187 to 1315; these read MAQQ…NNNN, YSQN…QQGI, SRSA…PPEK, QLPP…GAQN, VGTG…SNKW, RLSD…INTL, QGKL…PAAP, RMTP…PART, and KLTP…MGKE. Positions 71-80 are enriched in basic and acidic residues; that stretch reads REKIERQQGI. Composition is skewed to low complexity over residues 146 to 180 and 223 to 244; these read SLGH…QQQQ and PRTS…SGGV. Phosphothreonine is present on Thr-420. Over residues 428–441 the composition is skewed to basic and acidic residues; the sequence is LKTEKNHSLEKQDS. Residues 443-454 show a composition bias toward acidic residues; sequence LENDLELSESED. Phosphoserine occurs at positions 450 and 452. Low complexity predominate over residues 465–486; it reads GNSSNSSESDSSESGSESSSKN. Over residues 491–500 the composition is skewed to basic residues; that stretch reads HPNHQQHHHQ. Residues 501–525 show a composition bias toward low complexity; it reads LQQQQQQQQATMQQQQVLQQQHRSQ. The segment covering 577 to 586 has biased composition (gly residues); the sequence is TGSGSGGTLS. A compositionally biased stretch (polar residues) spans 594–604; the sequence is KTPSPTESNKW. A compositionally biased stretch (low complexity) spans 724 to 757; the sequence is SDSGTSASGSSSSSSSSSDSAMGGEVVPMPGPGE. A compositionally biased stretch (polar residues) spans 775-788; the sequence is QPTQSQKAPPSNSV. Residues 802–812 are compositionally biased toward basic residues; sequence QRQKKPRKKKA. A phosphoserine mark is found at Ser-821 and Ser-822. The a.T hook DNA-binding region spans 851–863; sequence KKGRGRPRKQQQS. The span at 860–898 shows a compositional bias: low complexity; that stretch reads QQQSGGSGNLSSASAGSSSQTKGPTLTAAKKPLAKTPLA. A phosphoserine mark is found at Ser-871 and Ser-873. A compositionally biased stretch (polar residues) spans 909 to 919; sequence SQSSSNGNTPT. 2 stretches are compositionally biased toward low complexity: residues 949–965 and 993–1004; these read SSSA…SSSS and GSGSSSPSSSGS. The span at 1011–1022 shows a compositional bias: polar residues; that stretch reads TRSQVGSGQALA. A compositionally biased stretch (low complexity) spans 1034 to 1060; sequence SQHSQHLSSSDCSSSSGGCTAVCSSSS. Positions 1065-1082 are enriched in basic and acidic residues; sequence EGRREKERERKPKSDKNK. Polar residues predominate over residues 1190–1205; the sequence is PAQQNGHLTPKDQATN. 2 stretches are compositionally biased toward basic and acidic residues: residues 1226–1243 and 1252–1282; these read EHPV…EAKF and FQLK…EQPP. Ser-1362 carries the post-translational modification Phosphoserine. Residue Thr-1364 is modified to Phosphothreonine. Residues 1564 to 1583 are compositionally biased toward low complexity; it reads NTPSSISPSNSVGSQGSGSN. A disordered region spans residues 1564–1588; it reads NTPSSISPSNSVGSQGSGSNTPPGR.

The protein belongs to the AF4 family. Component of the super elongation complex (SEC), at least composed of Ell, Cdk9, cyclin-T (CycT), lilli and ear.

The protein localises to the nucleus. Has a role in transcriptional regulation. Acts in parallel with the Ras/MAPK and the PI3K/PKB pathways in the control of cell identity and cellular growth. Essential for regulation of the cytoskeleton and cell growth but not for cell proliferation or growth rate. Required specifically for the microtubule-based basal transport of lipid droplets. Plays a partially redundant function downstream of Raf in cell fate specification in the developing eye. Pair-rule protein that regulates embryonic cellularization, gastrulation and segmentation. The polypeptide is AF4/FMR2 family member lilli (Drosophila melanogaster (Fruit fly)).